The following is a 387-amino-acid chain: D(4) dopamine receptor (387 aa).

Residues 1-34 are Extracellular-facing; it reads MGNSSATEDGGLLAGRGPESLGTGAGLGGAGAAA. N-linked (GlcNAc...) asparagine glycosylation occurs at N3. Residues 35–57 form a helical membrane-spanning segment; it reads LVGGVLLIGLVLAGNSLVCVSVA. The Cytoplasmic portion of the chain corresponds to 58 to 67; sequence SERTLQTPTN. A helical membrane pass occupies residues 68 to 90; the sequence is YFIVSLAAADLLLAVLVLPLFVY. Na(+) is bound at residue D77. Over 91-106 the chain is Extracellular; it reads SEVQGGVWLLSPRLCD. A disulfide bond links C105 and C180. Residues 107–128 form a helical membrane-spanning segment; that stretch reads TLMAMDVMLCTASIFNLCAISV. A Na(+)-binding site is contributed by S119. The Cytoplasmic segment spans residues 129 to 146; the sequence is DRFVAVTVPLRYNQQGQC. Residues 147 to 170 form a helical membrane-spanning segment; sequence QLLLIAATWLLSAAVASPVVCGLN. At 171 to 186 the chain is on the extracellular side; the sequence is DVPGRDPAVCCLENRD. A helical membrane pass occupies residues 187–208; the sequence is YVVYSSVCSFFLPCPLMLLLYW. Topologically, residues 209–314 are cytoplasmic; the sequence is ATFRGLRRWE…ITGRERKAMR (106 aa). Disordered stretches follow at residues 224–247 and 287–306; these read KLHS…TQGP and AALP…AKIT. Residues 315–337 form a helical membrane-spanning segment; it reads VLPVVVGAFLVCWTPFFVVHITR. Topologically, residues 338–346 are extracellular; the sequence is ALCPACFVS. C340 and C343 form a disulfide bridge. Residues 347–369 traverse the membrane as a helical segment; it reads PRLVSAVTWLGYVNSALNPIIYT. The Cytoplasmic portion of the chain corresponds to 370-387; that stretch reads IFNAEFRSVFRKTLRLRC. The S-palmitoyl cysteine moiety is linked to residue C387.

This sequence belongs to the G-protein coupled receptor 1 family. In terms of assembly, forms homo- and heterooligomers with DRD2. D4.7 allele exhibits higher affinity for homodimers compared to DRD2 heterodimers, while alleles D42. and 4.4 have similar affinities for both. The interaction with DRD2 may modulate agonist-induced downstream signaling. Interacts with CLIC6. Interacts with GPRASP1. May interact with ADORA2A. Interacts with KLHL12. In terms of processing, palmitoylated. Palmitoylation of the C-terminal Cys is important for normal expression at the cell membrane. In terms of tissue distribution, detected in olfactory bulb, hypothalamus, olfactory tubercle, brainstem and striatum.

It is found in the cell membrane. Dopamine receptor responsible for neuronal signaling in the mesolimbic system of the brain, an area of the brain that regulates emotion and complex behavior. Activated by dopamine, but also by epinephrine and norepinephrine, and by numerous synthetic agonists and drugs. Agonist binding triggers signaling via G proteins that inhibit adenylyl cyclase. Modulates the circadian rhythm of contrast sensitivity by regulating the rhythmic expression of NPAS2 in the retinal ganglion cells. This Mus musculus (Mouse) protein is D(4) dopamine receptor (Drd4).